The primary structure comprises 31 residues: Antifungal protein 1 (31 aa).

The protein resides in the secreted. Antifungal activity against C.albicans ATCC 76615. This Musca domestica (House fly) protein is Antifungal protein 1.